We begin with the raw amino-acid sequence, 310 residues long: Cytochrome f (310 aa).

An N-terminal signal peptide occupies residues 1–26 (MNIKLTLLVLISIINLMIIQPIQTLA). Heme-binding residues include phenylalanine 27, cysteine 47, cysteine 50, and histidine 51. A helical transmembrane segment spans residues 276–296 (IKGMIVFFFTVTIAQIFFVLK).

This sequence belongs to the cytochrome f family. As to quaternary structure, the 4 large subunits of the cytochrome b6-f complex are cytochrome b6, subunit IV (17 kDa polypeptide, petD), cytochrome f and the Rieske protein, while the 4 small subunits are PetG, PetL, PetM and PetN. The complex functions as a dimer. The cofactor is heme.

The protein localises to the plastid. Its subcellular location is the chloroplast thylakoid membrane. Component of the cytochrome b6-f complex, which mediates electron transfer between photosystem II (PSII) and photosystem I (PSI), cyclic electron flow around PSI, and state transitions. The chain is Cytochrome f from Gracilaria tenuistipitata var. liui (Red alga).